The chain runs to 552 residues: Hyaluronan synthase 2 (552 aa).

The Cytoplasmic portion of the chain corresponds to 1–11 (MHCERFLCILR). Residues 12–32 (IIGTTLFGVSLLLGITAAYIV) form a helical membrane-spanning segment. Residues 33-45 (GYQFIQTDNYYFS) lie on the Extracellular side of the membrane. A helical membrane pass occupies residues 46-66 (FGLYGAFLASHLIIQSLFAFL). At 67-374 (EHRKMKKSLE…NAMWFHKHHL (308 aa)) the chain is on the cytoplasmic side. Threonine 110 is modified (phosphothreonine). Lysine 190 participates in a covalent cross-link: Glycyl lysine isopeptide (Lys-Gly) (interchain with G-Cter in ubiquitin). A glycan (O-linked (GlcNAc) serine) is linked at serine 221. Residue threonine 328 is modified to Phosphothreonine. Residues 375–395 (WMTYEAVITGFFPFFLIATVI) form a helical membrane-spanning segment. At 396-402 (QLFYRGK) the chain is on the extracellular side. Residues 403–423 (IWNILLFLLTVQLVGLIKSSF) traverse the membrane as a helical segment. Residues 424 to 429 (ASCLRG) are Cytoplasmic-facing. A helical membrane pass occupies residues 430 to 450 (NIVMVFMSLYSVLYMSSLLPA). Topologically, residues 451 to 475 (KMFAIATINKAGWGTSGRKTIVVNF) are extracellular. A helical membrane pass occupies residues 476 to 496 (IGLIPVSVWFTILLGGVIFTI). Topologically, residues 497-510 (YKESKKPFSESKQT) are cytoplasmic. The helical transmembrane segment at 511–531 (VLIVGTLLYACYWVMLLTLYV) threads the bilayer. The Extracellular portion of the chain corresponds to 532–552 (VLINKCGRRKKGQQYDMVLDV).

It belongs to the NodC/HAS family. As to quaternary structure, homodimer; dimerization promotes enzymatic activity. Forms heterodimer with HAS3. Forms heterodimer with HAS1. The cofactor is Mg(2+). In terms of processing, phosphorylation at Thr-328 is essential for hyaluronan synthase activity. O-GlcNAcylation at Ser-221 increases the stability of HAS2 and plasma membrane localization. Post-translationally, ubiquitination at Lys-190; this ubiquitination is essential for hyaluronan synthase activity and homo- or hetero-oligomerization. Can also be poly-ubiquitinated. Deubiquitinated by USP17L22/USP17 and USP4. USP17L22/USP17 efficiently removes 'Lys-63'- and 'Lys-48'-linked polyubiquitin chains, whereas USP4 preferentially removes monoubiquitination and, partially, both 'Lys-63'- and 'Lys-48'-linked polyubiquitin chain. Overexpressed in skin fibroblasts.

It localises to the cell membrane. It is found in the endoplasmic reticulum membrane. The protein resides in the vesicle. Its subcellular location is the golgi apparatus membrane. The protein localises to the lysosome. The catalysed reaction is [hyaluronan](n) + UDP-N-acetyl-alpha-D-glucosamine = N-acetyl-beta-D-glucosaminyl-(1-&gt;4)-[hyaluronan](n) + UDP + H(+). The enzyme catalyses N-acetyl-beta-D-glucosaminyl-(1-&gt;4)-[hyaluronan](n) + UDP-alpha-D-glucuronate = [hyaluronan](n+1) + UDP + H(+). It functions in the pathway glycan biosynthesis; hyaluronan biosynthesis. Catalyzes the addition of GlcNAc or GlcUA monosaccharides to the nascent hyaluronan polymer. Therefore, it is essential to hyaluronan synthesis a major component of most extracellular matrices that has a structural role in tissues architectures and regulates cell adhesion, migration and differentiation. This is one of three isoenzymes responsible for cellular hyaluronan synthesis and it is particularly responsible for the synthesis of high molecular mass hyaluronan. This chain is Hyaluronan synthase 2 (Has2), found in Heterocephalus glaber (Naked mole rat).